We begin with the raw amino-acid sequence, 304 residues long: Mycothiol acetyltransferase (304 aa).

Residue Glu36 coordinates 1D-myo-inositol 2-(L-cysteinylamino)-2-deoxy-alpha-D-glucopyranoside. Residue 73-75 (LFV) coordinates acetyl-CoA. The region spanning 145-304 (LEIQTYTESV…EEHCVWAKSD (160 aa)) is the N-acetyltransferase domain. 1D-myo-inositol 2-(L-cysteinylamino)-2-deoxy-alpha-D-glucopyranoside is bound by residues Glu179, Lys225, and Glu236. 240–242 (VGL) contributes to the acetyl-CoA binding site. Residue Tyr274 coordinates 1D-myo-inositol 2-(L-cysteinylamino)-2-deoxy-alpha-D-glucopyranoside. Residue 279 to 284 (NDPAVK) coordinates acetyl-CoA.

This sequence belongs to the acetyltransferase family. MshD subfamily. In terms of assembly, monomer.

It catalyses the reaction 1D-myo-inositol 2-(L-cysteinylamino)-2-deoxy-alpha-D-glucopyranoside + acetyl-CoA = mycothiol + CoA + H(+). In terms of biological role, catalyzes the transfer of acetyl from acetyl-CoA to desacetylmycothiol (Cys-GlcN-Ins) to form mycothiol. The chain is Mycothiol acetyltransferase from Corynebacterium aurimucosum (strain ATCC 700975 / DSM 44827 / CIP 107346 / CN-1) (Corynebacterium nigricans).